A 681-amino-acid polypeptide reads, in one-letter code: Transmembrane protein 168-A (681 aa).

The next 9 helical transmembrane spans lie at Phe16 to Met36, Met47 to Tyr67, Ser73 to Leu93, Pro135 to Ser155, Leu156 to Ile176, Leu184 to Leu204, Phe252 to Leu272, Val281 to Val301, and Leu346 to Ala365. A glycan (N-linked (GlcNAc...) asparagine) is linked at Asn517.

The protein belongs to the TMEM168 family.

It is found in the nucleus membrane. In terms of biological role, plays a key role in maintaining the cardiac electrical stability by modulating cell surface expression of SCN5A. In Danio rerio (Zebrafish), this protein is Transmembrane protein 168-A (tmem168a).